The chain runs to 193 residues: Dual-action ribosomal maturation protein DarP (193 aa).

Over residues 1–10 (MRGRDEETGE) the composition is skewed to basic and acidic residues. Disordered regions lie at residues 1–20 (MRGRDEETGEFRGASRSQQR) and 171–193 (QEQGLESGDSELEDGESASEDDE). A compositionally biased stretch (acidic residues) spans 178–193 (GDSELEDGESASEDDE).

It belongs to the DarP family.

It localises to the cytoplasm. In terms of biological role, member of a network of 50S ribosomal subunit biogenesis factors which assembles along the 30S-50S interface, preventing incorrect 23S rRNA structures from forming. Promotes peptidyl transferase center (PTC) maturation. The polypeptide is Dual-action ribosomal maturation protein DarP (Xanthomonas axonopodis pv. citri (strain 306)).